A 234-amino-acid polypeptide reads, in one-letter code: Peroxiredoxin (234 aa).

Positions 6–161 constitute a Thioredoxin domain; the sequence is PLIGEKLPEM…ILRLLKALQV (156 aa). The active-site Cysteine sulfenic acid (-SOH) intermediate is the C48. Residue R124 coordinates substrate. Cysteines 203 and 209 form a disulfide.

This sequence belongs to the peroxiredoxin family. Prx6 subfamily. Homodecamer. Pentamer of dimers that assemble into a ring structure.

Its subcellular location is the cytoplasm. It catalyses the reaction a hydroperoxide + [thioredoxin]-dithiol = an alcohol + [thioredoxin]-disulfide + H2O. Thiol-specific peroxidase that catalyzes the reduction of hydrogen peroxide and organic hydroperoxides to water and alcohols, respectively. Plays a role in cell protection against oxidative stress by detoxifying peroxides. This is Peroxiredoxin from Ignicoccus hospitalis (strain KIN4/I / DSM 18386 / JCM 14125).